A 278-amino-acid polypeptide reads, in one-letter code: Small ribosomal subunit protein uS3 (278 aa).

The KH type-2 domain occupies 39 to 107 (LRKAISKKYV…KVQLNIVEIS (69 aa)). Positions 255–278 (AEIPAEEKPKRVVKKAENITKEEE) are disordered.

The protein belongs to the universal ribosomal protein uS3 family. In terms of assembly, part of the 30S ribosomal subunit. Forms a tight complex with proteins S10 and S14.

In terms of biological role, binds the lower part of the 30S subunit head. Binds mRNA in the 70S ribosome, positioning it for translation. The protein is Small ribosomal subunit protein uS3 of Dehalococcoides mccartyi (strain ATCC BAA-2100 / JCM 16839 / KCTC 5957 / BAV1).